Here is an 877-residue protein sequence, read N- to C-terminus: Protein P (877 aa).

The segment at 1–183 (MHPFSQLFRN…GKPYSWGHRQ (183 aa)) is terminal protein domain (TP). The spacer stretch occupies residues 184-382 (LEQHNGQQHE…YCLHHIVSSL (199 aa)). A compositionally biased stretch (basic and acidic residues) spans 185–198 (EQHNGQQHESHLQS). Residues 185–347 (EQHNGQQHES…PSSSGLCGGT (163 aa)) form a disordered region. Over residues 233 to 242 (FGESQKSART) the composition is skewed to polar residues. A compositionally biased stretch (low complexity) spans 267 to 281 (QQGSSQVSSPRSKSS). Polar residues-rich tracts occupy residues 282 to 302 (NFRN…PTWY) and 338 to 347 (PSSSGLCGGT). A polymerase/reverse transcriptase domain (RT) region spans residues 383 to 723 (EDWGPCTISG…YAELWPVARQ (341 aa)). A Reverse transcriptase domain is found at 393–634 (DVTIRSPRTP…HHLHFMGYVI (242 aa)). Mg(2+) is bound by residues Asp465, Asp585, and Asp586.

The protein belongs to the hepadnaviridae P protein family.

The catalysed reaction is DNA(n) + a 2'-deoxyribonucleoside 5'-triphosphate = DNA(n+1) + diphosphate. The enzyme catalyses Endonucleolytic cleavage to 5'-phosphomonoester.. With respect to regulation, activated by host HSP70 and HSP40 in vitro to be able to bind the epsilon loop of the pgRNA. Because deletion of the RNase H region renders the protein partly chaperone-independent, the chaperones may be needed indirectly to relieve occlusion of the RNA-binding site by this domain. Inhibited by several reverse-transcriptase inhibitors: Lamivudine, Adefovir and Entecavir. Multifunctional enzyme that converts the viral RNA genome into dsDNA in viral cytoplasmic capsids. This enzyme displays a DNA polymerase activity that can copy either DNA or RNA templates, and a ribonuclease H (RNase H) activity that cleaves the RNA strand of RNA-DNA heteroduplexes in a partially processive 3'- to 5'-endonucleasic mode. Neo-synthesized pregenomic RNA (pgRNA) are encapsidated together with the P protein, and reverse-transcribed inside the nucleocapsid. Initiation of reverse-transcription occurs first by binding the epsilon loop on the pgRNA genome, and is initiated by protein priming, thereby the 5'-end of (-)DNA is covalently linked to P protein. Partial (+)DNA is synthesized from the (-)DNA template and generates the relaxed circular DNA (RC-DNA) genome. After budding and infection, the RC-DNA migrates in the nucleus, and is converted into a plasmid-like covalently closed circular DNA (cccDNA). The activity of P protein does not seem to be necessary for cccDNA generation, and is presumably released from (+)DNA by host nuclear DNA repair machinery. This is Protein P from Arctic squirrel hepatitis virus (ASHV).